We begin with the raw amino-acid sequence, 239 residues long: Skn-1 dependent zygotic transcript 1 protein (239 aa).

As to expression, expressed in mesendodermal precursor cells of embryos.

Its function is as follows. May have a role in mesendoderm development during embryogenesis. The polypeptide is Skn-1 dependent zygotic transcript 1 protein (sdz-1) (Caenorhabditis elegans).